Consider the following 149-residue polypeptide: Arginine repressor (149 aa).

It belongs to the ArgR family.

The protein resides in the cytoplasm. Its pathway is amino-acid biosynthesis; L-arginine biosynthesis [regulation]. In terms of biological role, regulates arginine biosynthesis genes. This Exiguobacterium sp. (strain ATCC BAA-1283 / AT1b) protein is Arginine repressor.